The following is a 1222-amino-acid chain: BOS complex subunit NOMO3 (1222 aa).

An N-terminal signal peptide occupies residues 1–31 (MLVGQGAGPLGPAVVTAAVVLLLSGVGPAHG). At 32–1155 (SEDIVVGCGG…NPTRKLPEQD (1124 aa)) the chain is on the extracellular side. N-linked (GlcNAc...) asparagine glycans are attached at residues Asn-50, Asn-218, and Asn-618. Residues 1156-1176 (IAQGSYIALPLTLLVLLAGYN) traverse the membrane as a helical segment. The Cytoplasmic portion of the chain corresponds to 1177 to 1222 (HDKLIPLLLQLTSRLQGVGALGQAASDNSGPEDAKRQAKKQKTRRT). The segment at 1198–1222 (GQAASDNSGPEDAKRQAKKQKTRRT) is disordered. The span at 1213 to 1222 (QAKKQKTRRT) shows a compositional bias: basic residues.

In terms of assembly, component of the back of Sec61 (BOS) complex, composed of NCLN/Nicalin, NOMO (NOMO1, NOMO2 or NOMO3) and TMEM147. The BOS complex is part of the multi-pass translocon (MPT) complex, composed of three subcomplexes, the GEL complex (composed of RAB5IF/OPTI and TMCO1), the BOS complex (composed of NCLN/Nicalin, NOMO and TMEM147) and the PAT complex (composed of WDR83OS/Asterix and CCDC47). The MPT complex associates with the SEC61 complex. Due to the strong similarity between NOMO1, NOMO2 and NOMO3, similar interaction pattern probably occur for the three gene copies.

The protein resides in the endoplasmic reticulum membrane. Its function is as follows. Component of the multi-pass translocon (MPT) complex that mediates insertion of multi-pass membrane proteins into the lipid bilayer of membranes. The MPT complex takes over after the SEC61 complex: following membrane insertion of the first few transmembrane segments of proteins by the SEC61 complex, the MPT complex occludes the lateral gate of the SEC61 complex to promote insertion of subsequent transmembrane regions. This Homo sapiens (Human) protein is BOS complex subunit NOMO3 (NOMO3).